The primary structure comprises 261 residues: Indole-3-glycerol phosphate synthase (261 aa).

This sequence belongs to the TrpC family.

The enzyme catalyses 1-(2-carboxyphenylamino)-1-deoxy-D-ribulose 5-phosphate + H(+) = (1S,2R)-1-C-(indol-3-yl)glycerol 3-phosphate + CO2 + H2O. Its pathway is amino-acid biosynthesis; L-tryptophan biosynthesis; L-tryptophan from chorismate: step 4/5. This chain is Indole-3-glycerol phosphate synthase, found in Oceanobacillus iheyensis (strain DSM 14371 / CIP 107618 / JCM 11309 / KCTC 3954 / HTE831).